A 463-amino-acid polypeptide reads, in one-letter code: Asparagine--tRNA ligase (463 aa).

Belongs to the class-II aminoacyl-tRNA synthetase family. Homodimer.

The protein resides in the cytoplasm. The enzyme catalyses tRNA(Asn) + L-asparagine + ATP = L-asparaginyl-tRNA(Asn) + AMP + diphosphate + H(+). This Bacillus cereus (strain ZK / E33L) protein is Asparagine--tRNA ligase.